Here is a 489-residue protein sequence, read N- to C-terminus: ATP-dependent zinc metalloprotease FtsH 3 (489 aa).

Topologically, residues 1–14 (MNPRPVRPGGSLQQ) are cytoplasmic. The chain crosses the membrane as a helical span at residues 15–31 (SLLALGSLSVAVGLAVW). Over 32-489 (QQRTLGRGRS…GPRPARPAMN (458 aa)) the chain is Extracellular. 95–102 (GPPGTGKT) is a binding site for ATP. Position 315 (histidine 315) interacts with Zn(2+). Residue glutamate 316 is part of the active site. Residues histidine 319 and aspartate 391 each coordinate Zn(2+).

This sequence in the central section; belongs to the AAA ATPase family. The protein in the C-terminal section; belongs to the peptidase M41 family. In terms of assembly, homohexamer. The cofactor is Zn(2+).

The protein resides in the cell membrane. In terms of biological role, acts as a processive, ATP-dependent zinc metallopeptidase for both cytoplasmic and membrane proteins. Plays a role in the quality control of integral membrane proteins. This is ATP-dependent zinc metalloprotease FtsH 3 from Sphaerobacter thermophilus (strain ATCC 49802 / DSM 20745 / KCCM 41009 / NCIMB 13125 / S 6022).